Here is a 388-residue protein sequence, read N- to C-terminus: Phosphopentomutase (388 aa).

D11, D283, H288, D324, H325, and H336 together coordinate Mn(2+).

It belongs to the phosphopentomutase family. It depends on Mn(2+) as a cofactor.

The protein localises to the cytoplasm. The enzyme catalyses 2-deoxy-alpha-D-ribose 1-phosphate = 2-deoxy-D-ribose 5-phosphate. The catalysed reaction is alpha-D-ribose 1-phosphate = D-ribose 5-phosphate. It participates in carbohydrate degradation; 2-deoxy-D-ribose 1-phosphate degradation; D-glyceraldehyde 3-phosphate and acetaldehyde from 2-deoxy-alpha-D-ribose 1-phosphate: step 1/2. Functionally, isomerase that catalyzes the conversion of deoxy-ribose 1-phosphate (dRib-1-P) and ribose 1-phosphate (Rib-1-P) to deoxy-ribose 5-phosphate (dRib-5-P) and ribose 5-phosphate (Rib-5-P), respectively. The polypeptide is Phosphopentomutase (Anaeromyxobacter sp. (strain K)).